A 491-amino-acid chain; its full sequence is Ketol-acid reductoisomerase (NADP(+)) (491 aa).

The region spanning 15-208 (AQLGKCRFMG…GGHRAGVLES (194 aa)) is the KARI N-terminal Rossmann domain. NADP(+) contacts are provided by residues 45–48 (CGAQ), Arg68, Arg76, Ser78, and 108–110 (DKQ). His132 is a catalytic residue. Position 158 (Gly158) interacts with NADP(+). 2 KARI C-terminal knotted domains span residues 209 to 344 (SFVA…TAPQ) and 345 to 484 (YEGK…MTDM). The Mg(2+) site is built by Asp217, Glu221, Glu389, and Glu393. Ser414 provides a ligand contact to substrate.

It belongs to the ketol-acid reductoisomerase family. The cofactor is Mg(2+).

It catalyses the reaction (2R)-2,3-dihydroxy-3-methylbutanoate + NADP(+) = (2S)-2-acetolactate + NADPH + H(+). The enzyme catalyses (2R,3R)-2,3-dihydroxy-3-methylpentanoate + NADP(+) = (S)-2-ethyl-2-hydroxy-3-oxobutanoate + NADPH + H(+). Its pathway is amino-acid biosynthesis; L-isoleucine biosynthesis; L-isoleucine from 2-oxobutanoate: step 2/4. It functions in the pathway amino-acid biosynthesis; L-valine biosynthesis; L-valine from pyruvate: step 2/4. Functionally, involved in the biosynthesis of branched-chain amino acids (BCAA). Catalyzes an alkyl-migration followed by a ketol-acid reduction of (S)-2-acetolactate (S2AL) to yield (R)-2,3-dihydroxy-isovalerate. In the isomerase reaction, S2AL is rearranged via a Mg-dependent methyl migration to produce 3-hydroxy-3-methyl-2-ketobutyrate (HMKB). In the reductase reaction, this 2-ketoacid undergoes a metal-dependent reduction by NADPH to yield (R)-2,3-dihydroxy-isovalerate. The sequence is that of Ketol-acid reductoisomerase (NADP(+)) from Shigella dysenteriae serotype 1 (strain Sd197).